The following is a 1266-amino-acid chain: Rho GTPase-activating protein 29 (1266 aa).

Phosphoserine is present on residues serine 166, serine 171, serine 174, and serine 185. Residues 187–457 (IELDNLLLKN…SAKLYDPGQE (271 aa)) enclose the F-BAR domain. Positions 291–413 (RKNEMEKQRK…EILTQLRTLV (123 aa)) form a coiled coil. Phosphoserine is present on residues serine 496, serine 516, and serine 549. Residues 538–556 (SESTGGSSESRSLDSESIS) show a composition bias toward low complexity. The interval 538–596 (SESTGGSSESRSLDSESISPGDFHRKLPRTPSSGTMSSADDLDEREPPSPSEAGPNSLG) is disordered. The segment at 609–654 (THKFRKLRSPTKCRDCEGIVMFPGVECEECLLVCHRKCLENLVIVC) adopts a Phorbol-ester/DAG-type zinc-finger fold. Positions 668-883 (AEFIQVAKKE…FLITYAQKIF (216 aa)) constitute a Rho-GAP domain. Phosphoserine occurs at positions 915, 951, and 1023. Disordered stretches follow at residues 1033–1054 (AGSP…KFGK), 1114–1153 (VSTG…DSCP), and 1222–1248 (VQTS…QRPR). Residues 1115–1127 (STGNNRGHSSGAA) are compositionally biased toward polar residues. A compositionally biased stretch (basic and acidic residues) spans 1132–1148 (AHADPARSARDTSEHSS). Phosphoserine occurs at positions 1149 and 1151. Residues 1263–1266 (PQFV) form an interaction with PTPN13/PTPL1 region.

Interacts with PTPN13/PTPL1. Interacts with RAP2A via its coiled coil domain. Interacts with RASIP1.

GTPase activator for the Rho-type GTPases by converting them to an inactive GDP-bound state. Has strong activity toward RHOA, and weaker activity toward RAC1 and CDC42. May act as a specific effector of RAP2A to regulate Rho. In concert with RASIP1, suppresses RhoA signaling and dampens ROCK and MYH9 activities in endothelial cells and plays an essential role in blood vessel tubulogenesis. This chain is Rho GTPase-activating protein 29 (Arhgap29), found in Rattus norvegicus (Rat).